A 164-amino-acid polypeptide reads, in one-letter code: Interferon gamma (164 aa).

Residues 1–19 (MTCQTYNLFVLSVIMIYYG) form the signal peptide. N-linked (GlcNAc...) asparagine glycans are attached at residues Asn-42 and Asn-61.

Belongs to the type II (or gamma) interferon family. As to quaternary structure, homodimer.

It localises to the secreted. In terms of biological role, produced by lymphocytes activated by specific antigens or mitogens. IFN-gamma, in addition to having antiviral activity, has important immunoregulatory functions. It is a potent activator of macrophages, it has antiproliferative effects on transformed cells and it can potentiate the antiviral and antitumor effects of the type I interferons. This Meleagris gallopavo (Wild turkey) protein is Interferon gamma (IFNG).